A 320-amino-acid polypeptide reads, in one-letter code: Cytochrome f (320 aa).

Positions 1 to 35 (MENRNTFSWVKEQITRSISVSIMIYVITRTSISNA) are cleaved as a signal peptide. Residues Tyr36, Cys56, Cys59, and His60 each coordinate heme. A helical transmembrane segment spans residues 286–306 (VQGLLFFFASVILAQVFLVLK).

The protein belongs to the cytochrome f family. The 4 large subunits of the cytochrome b6-f complex are cytochrome b6, subunit IV (17 kDa polypeptide, petD), cytochrome f and the Rieske protein, while the 4 small subunits are PetG, PetL, PetM and PetN. The complex functions as a dimer. Heme serves as cofactor.

It is found in the plastid. Its subcellular location is the chloroplast thylakoid membrane. Component of the cytochrome b6-f complex, which mediates electron transfer between photosystem II (PSII) and photosystem I (PSI), cyclic electron flow around PSI, and state transitions. This Hordeum vulgare (Barley) protein is Cytochrome f.